Consider the following 92-residue polypeptide: Alpha-conotoxin VxXXA (92 aa).

Positions 1 to 24 (MPKLEMMLLVLLIFPLSYFIAAGG) are cleaved as a signal peptide. The propeptide occupies 25–45 (QVVQVDRRGDGLAGYLQRGDR). A 4-hydroxyproline; partial mark is found at Pro55, Pro70, and Pro74. Disulfide bonds link Cys63-Cys72, Cys68-Cys80, Cys73-Cys90, and Cys78-Cys92.

This sequence belongs to the conotoxin D superfamily. As to quaternary structure, homodimer or pseudo-homodimer. Three dimers exist: homodimer of VxXXA, pseudo-homodimer of both VxXXA and [hydroxyPro-74]VxXXA and homodimer of [hydroxyPro-74]VxXXA. These three components exist in a 1:2:1 ratio. VxXXA stands for the form with the Pro-55 hydroxylated. A second major form has both Pro-55 and Pro-74 hydroxylated. The two major forms VxXXA and [hydroxyPro-74]VxXXA exist in a 1:1 ratio. In terms of processing, minor forms are [hydroxyPro-70,hydroxyPro-74]VxXXA and [Pro-55]VxXXA. In terms of tissue distribution, expressed by the venom duct.

It is found in the secreted. Its function is as follows. Alpha-conotoxins act on postsynaptic membranes, they bind to the nicotinic acetylcholine receptors (nAChR) and thus inhibit them. Through its two C-terminal domains, this homodimeric protein would bind to two nAChR allosteric sites, located outside the nAChR C-loop of the principal binding face and at the adjacent binding interface in a clockwise direction. This toxin specifically blocks mammalian neuronal nAChR of the alpha-7/CHRNA7, alpha-3-beta-2/CHRNA3-CHRNB2 (IC(50)=370 nM) and alpha-4-beta-2/CHRNA4-CHRNB2 subtypes. VxXXB inhibits alpha-7/CHRNA7 and alpha-3-beta-2/CHRNA3-CHRNB2 nAChR subtypes with the highest efficiency, followed by VxXXA and VxXXC. VxXXB and VxXXC inhibit the alpha-4-beta-2/CHRNA4-CHRNB2 nAChR subtype more efficiently than VxXXA. The chain is Alpha-conotoxin VxXXA from Conus vexillum (Flag cone).